Here is a 39-residue protein sequence, read N- to C-terminus: Photosystem II reaction center protein Psb30 (39 aa).

A helical transmembrane segment spans residues Ile-12–Leu-32.

The protein belongs to the Psb30/Ycf12 family. In terms of assembly, PSII is composed of 1 copy each of membrane proteins PsbA, PsbB, PsbC, PsbD, PsbE, PsbF, PsbH, PsbI, PsbJ, PsbK, PsbL, PsbM, PsbT, PsbX, PsbY, PsbZ, Psb30/Ycf12, peripheral proteins PsbO, CyanoQ (PsbQ), PsbU, PsbV and a large number of cofactors. It forms dimeric complexes.

It is found in the cellular thylakoid membrane. A core subunit of photosystem II (PSII), probably helps stabilize the reaction center. In Microcystis aeruginosa (strain NIES-843 / IAM M-2473), this protein is Photosystem II reaction center protein Psb30.